The chain runs to 154 residues: CASP-like protein 5B3 (154 aa).

Residues 1–17 (MKDVVGSPGTWSGMSLR) are Cytoplasmic-facing. Residues 18–38 (VSQCVFAGASVVAMASAYGFS) form a helical membrane-spanning segment. Residue Asn-39 is glycosylated (N-linked (GlcNAc...) asparagine). Residues 39–42 (NYTA) are Extracellular-facing. The helical transmembrane segment at 43–63 (FCYLIASMGLQLLWSFGLACL) threads the bilayer. The Cytoplasmic segment spans residues 64-77 (DIYSLQTKRDLHNP). The chain crosses the membrane as a helical span at residues 78-98 (VLVSLFVVGDWVTAILSFAAA). Residues 99-129 (SASAGVTILFERDVHFCRMYPQLSCGRYELS) lie on the Extracellular side of the membrane. The helical transmembrane segment at 130 to 150 (VILAFITWSFIATSAVSMFWL) threads the bilayer. Residues 151-154 (LASL) are Cytoplasmic-facing.

This sequence belongs to the Casparian strip membrane proteins (CASP) family. As to quaternary structure, homodimer and heterodimers.

The protein localises to the cell membrane. This Oryza sativa subsp. indica (Rice) protein is CASP-like protein 5B3.